The following is a 150-amino-acid chain: Cytochrome b5 type B (150 aa).

Positions 1-15 (MSGSMATAEASGSDG) are excised as a propeptide. The segment at 1–21 (MSGSMATAEASGSDGKGQEVE) is disordered. Ser23 carries the phosphoserine modification. The 77-residue stretch at 24–100 (VTYYRMEEVA…LKQYYIGDIH (77 aa)) folds into the Cytochrome b5 heme-binding domain. Residue Lys34 is modified to N6-acetyllysine. Ser37 is subject to Phosphoserine. An N6-methyllysine modification is found at Lys39. Heme-binding residues include His59 and His83. Ser84 is subject to Phosphoserine. Residues 122–144 (CWAYWILPIIGAVLLGFLYRYYT) form a helical membrane-spanning segment.

Belongs to the cytochrome b5 family. Component of a complex composed of cytochrome b5, NADH-cytochrome b5 reductase (CYB5R3) and MTARC2.

It is found in the mitochondrion outer membrane. Cytochrome b5 is a membrane-bound hemoprotein functioning as an electron carrier for several membrane-bound oxygenases. The chain is Cytochrome b5 type B (CYB5B) from Pongo abelii (Sumatran orangutan).